We begin with the raw amino-acid sequence, 161 residues long: Endoribonuclease YbeY (161 aa).

Residues H121, H125, and H131 each coordinate Zn(2+).

It belongs to the endoribonuclease YbeY family. The cofactor is Zn(2+).

The protein localises to the cytoplasm. In terms of biological role, single strand-specific metallo-endoribonuclease involved in late-stage 70S ribosome quality control and in maturation of the 3' terminus of the 16S rRNA. The polypeptide is Endoribonuclease YbeY (Bordetella avium (strain 197N)).